The primary structure comprises 228 residues: Heat shock 70-related protein 4 (228 aa).

The disordered stretch occupies residues 57 to 80; that stretch reads RWHEPPGNTVFDEAHDRPQVRRPD. Residues 68–80 are compositionally biased toward basic and acidic residues; the sequence is DEAHDRPQVRRPD.

It belongs to the heat shock protein 70 family.

The protein is Heat shock 70-related protein 4 (HSP70.4) of Leishmania major.